Here is a 698-residue protein sequence, read N- to C-terminus: DNA ligase (698 aa).

NAD(+) contacts are provided by residues 40–44, 89–90, and E123; these read DDVYD and SL. K125 acts as the N6-AMP-lysine intermediate in catalysis. The NAD(+) site is built by R146, E184, K300, and K324. Residues C417, C420, C435, and C441 each contribute to the Zn(2+) site. The BRCT domain occupies 618-698; that stretch reads SSASPVAGKA…EWLALTGAAD (81 aa).

This sequence belongs to the NAD-dependent DNA ligase family. LigA subfamily. Requires Mg(2+) as cofactor. The cofactor is Mn(2+).

It catalyses the reaction NAD(+) + (deoxyribonucleotide)n-3'-hydroxyl + 5'-phospho-(deoxyribonucleotide)m = (deoxyribonucleotide)n+m + AMP + beta-nicotinamide D-nucleotide.. Functionally, DNA ligase that catalyzes the formation of phosphodiester linkages between 5'-phosphoryl and 3'-hydroxyl groups in double-stranded DNA using NAD as a coenzyme and as the energy source for the reaction. It is essential for DNA replication and repair of damaged DNA. This is DNA ligase from Paramagnetospirillum magneticum (strain ATCC 700264 / AMB-1) (Magnetospirillum magneticum).